Consider the following 162-residue polypeptide: Allophycocyanin beta chain (162 aa).

At asparagine 72 the chain carries N4-methylasparagine. Residue cysteine 82 coordinates (2R,3E)-phycocyanobilin.

This sequence belongs to the phycobiliprotein family. Heterodimer of an alpha and a beta chain. Contains one covalently linked phycocyanobilin chromophore.

The protein resides in the cellular thylakoid membrane. Functionally, light-harvesting photosynthetic bile pigment-protein from the phycobiliprotein complex. Allophycocyanin has a maximum absorption at approximately 650 nanometers. The polypeptide is Allophycocyanin beta chain (Microchaete diplosiphon (Fremyella diplosiphon)).